The chain runs to 211 residues: Cytochrome c biogenesis ATP-binding export protein CcmA (211 aa).

One can recognise an ABC transporter domain in the interval 6–211; it reads LQTVALACER…RDIDLGNWAV (206 aa). 38-45 serves as a coordination point for ATP; the sequence is GPNGSGKT.

The protein belongs to the ABC transporter superfamily. CcmA exporter (TC 3.A.1.107) family. In terms of assembly, the complex is composed of two ATP-binding proteins (CcmA) and two transmembrane proteins (CcmB).

It localises to the cell inner membrane. It catalyses the reaction heme b(in) + ATP + H2O = heme b(out) + ADP + phosphate + H(+). Part of the ABC transporter complex CcmAB involved in the biogenesis of c-type cytochromes; once thought to export heme, this seems not to be the case, but its exact role is uncertain. Responsible for energy coupling to the transport system. In Pseudomonas fluorescens (strain Pf0-1), this protein is Cytochrome c biogenesis ATP-binding export protein CcmA.